A 129-amino-acid chain; its full sequence is Large ribosomal subunit protein bL17 (129 aa).

It belongs to the bacterial ribosomal protein bL17 family. In terms of assembly, part of the 50S ribosomal subunit. Contacts protein L32.

The chain is Large ribosomal subunit protein bL17 from Thiobacillus denitrificans (strain ATCC 25259 / T1).